The primary structure comprises 86 residues: Large ribosomal subunit protein uL23 (86 aa).

Belongs to the universal ribosomal protein uL23 family. In terms of assembly, part of the 50S ribosomal subunit. Contacts protein L29.

In terms of biological role, binds to 23S rRNA. One of the proteins that surrounds the polypeptide exit tunnel on the outside of the ribosome. The chain is Large ribosomal subunit protein uL23 from Methanosphaera stadtmanae (strain ATCC 43021 / DSM 3091 / JCM 11832 / MCB-3).